We begin with the raw amino-acid sequence, 308 residues long: Homoserine kinase (308 aa).

85–95 (PLTRGLGSSAA) contacts ATP.

This sequence belongs to the GHMP kinase family. Homoserine kinase subfamily.

The protein localises to the cytoplasm. The enzyme catalyses L-homoserine + ATP = O-phospho-L-homoserine + ADP + H(+). The protein operates within amino-acid biosynthesis; L-threonine biosynthesis; L-threonine from L-aspartate: step 4/5. In terms of biological role, catalyzes the ATP-dependent phosphorylation of L-homoserine to L-homoserine phosphate. This is Homoserine kinase from Caldicellulosiruptor saccharolyticus (strain ATCC 43494 / DSM 8903 / Tp8T 6331).